The chain runs to 199 residues: Prolactin-2 (199 aa).

3 disulfide bridges follow: cysteine 4-cysteine 11, cysteine 58-cysteine 174, and cysteine 191-cysteine 199.

The protein belongs to the somatotropin/prolactin family.

Its subcellular location is the secreted. This Crocodylus novaeguineae (Crocodile) protein is Prolactin-2.